The sequence spans 234 residues: Isoprenyl transferase (234 aa).

Asp13 is a catalytic residue. Asp13 is a Mg(2+) binding site. Substrate-binding positions include 14-17, Trp18, Arg26, His30, and 58-60; these read GNGR and STE. Asn61 serves as the catalytic Proton acceptor. Substrate is bound by residues Trp62, Arg64, Arg180, and 186 to 188; that span reads RLS. Position 199 (Glu199) interacts with Mg(2+).

It belongs to the UPP synthase family. As to quaternary structure, homodimer. Mg(2+) serves as cofactor.

Catalyzes the condensation of isopentenyl diphosphate (IPP) with allylic pyrophosphates generating different type of terpenoids. This is Isoprenyl transferase from Helicobacter pylori (strain J99 / ATCC 700824) (Campylobacter pylori J99).